The chain runs to 214 residues: Phosphatidylserine decarboxylase proenzyme (214 aa).

The active-site Schiff-base intermediate with substrate; via pyruvic acid is the Ser182. The residue at position 182 (Ser182) is a Pyruvic acid (Ser); by autocatalysis.

It belongs to the phosphatidylserine decarboxylase family. PSD-A subfamily. Heterodimer of a large membrane-associated beta subunit and a small pyruvoyl-containing alpha subunit. Pyruvate is required as a cofactor. Post-translationally, is synthesized initially as an inactive proenzyme. Formation of the active enzyme involves a self-maturation process in which the active site pyruvoyl group is generated from an internal serine residue via an autocatalytic post-translational modification. Two non-identical subunits are generated from the proenzyme in this reaction, and the pyruvate is formed at the N-terminus of the alpha chain, which is derived from the carboxyl end of the proenzyme. The post-translation cleavage follows an unusual pathway, termed non-hydrolytic serinolysis, in which the side chain hydroxyl group of the serine supplies its oxygen atom to form the C-terminus of the beta chain, while the remainder of the serine residue undergoes an oxidative deamination to produce ammonia and the pyruvoyl prosthetic group on the alpha chain.

Its subcellular location is the cell membrane. It catalyses the reaction a 1,2-diacyl-sn-glycero-3-phospho-L-serine + H(+) = a 1,2-diacyl-sn-glycero-3-phosphoethanolamine + CO2. It functions in the pathway phospholipid metabolism; phosphatidylethanolamine biosynthesis; phosphatidylethanolamine from CDP-diacylglycerol: step 2/2. Catalyzes the formation of phosphatidylethanolamine (PtdEtn) from phosphatidylserine (PtdSer). The protein is Phosphatidylserine decarboxylase proenzyme of Burkholderia ambifaria (strain MC40-6).